A 161-amino-acid polypeptide reads, in one-letter code: DNA-directed RNA polymerase III subunit RPC9 (161 aa).

Residues 75–96 form a disordered region; sequence QEDEGEERESSGAKDAEKSGIS. A compositionally biased stretch (basic and acidic residues) spans 82-96; that stretch reads RESSGAKDAEKSGIS.

It belongs to the eukaryotic RPC9 RNA polymerase subunit family. In terms of assembly, component of the RNA polymerase III (Pol III) complex consisting of 17 subunits. Forms a Pol III subcomplex with RPC25/RPC8. Interacts with BURF1/TDS4.

The protein localises to the nucleus. DNA-dependent RNA polymerase catalyzes the transcription of DNA into RNA using the four ribonucleoside triphosphates as substrates. Specific peripheric component of RNA polymerase III which synthesizes small RNAs, such as 5S rRNA and tRNAs. The RPC25/RPC8-RPC17/RPC9 subcomplex may bind Pol III transcripts emerging from the adjacent exit pore during elongation. In Saccharomyces cerevisiae (strain ATCC 204508 / S288c) (Baker's yeast), this protein is DNA-directed RNA polymerase III subunit RPC9 (RPC17).